The following is a 252-amino-acid chain: 2-succinyl-6-hydroxy-2,4-cyclohexadiene-1-carboxylate synthase (252 aa).

It belongs to the AB hydrolase superfamily. MenH family. As to quaternary structure, monomer.

The enzyme catalyses 5-enolpyruvoyl-6-hydroxy-2-succinyl-cyclohex-3-ene-1-carboxylate = (1R,6R)-6-hydroxy-2-succinyl-cyclohexa-2,4-diene-1-carboxylate + pyruvate. Its pathway is quinol/quinone metabolism; 1,4-dihydroxy-2-naphthoate biosynthesis; 1,4-dihydroxy-2-naphthoate from chorismate: step 3/7. The protein operates within quinol/quinone metabolism; menaquinone biosynthesis. Catalyzes a proton abstraction reaction that results in 2,5-elimination of pyruvate from 2-succinyl-5-enolpyruvyl-6-hydroxy-3-cyclohexene-1-carboxylate (SEPHCHC) and the formation of 2-succinyl-6-hydroxy-2,4-cyclohexadiene-1-carboxylate (SHCHC). This Klebsiella pneumoniae (strain 342) protein is 2-succinyl-6-hydroxy-2,4-cyclohexadiene-1-carboxylate synthase.